A 531-amino-acid polypeptide reads, in one-letter code: Putative UDP-glucuronosyltransferase ugt-46 (531 aa).

Positions 1–17 (MRLIFVLLATFVNAAFS) are cleaved as a signal peptide. Residue Asn304 is glycosylated (N-linked (GlcNAc...) asparagine). A helical transmembrane segment spans residues 493–513 (VIIPVFWLSISLVIPTIFGWY).

It belongs to the UDP-glycosyltransferase family.

Its subcellular location is the membrane. The enzyme catalyses glucuronate acceptor + UDP-alpha-D-glucuronate = acceptor beta-D-glucuronoside + UDP + H(+). This is Putative UDP-glucuronosyltransferase ugt-46 (ugt-46) from Caenorhabditis elegans.